Here is a 129-residue protein sequence, read N- to C-terminus: Large ribosomal subunit protein bL17 (129 aa).

This sequence belongs to the bacterial ribosomal protein bL17 family. As to quaternary structure, part of the 50S ribosomal subunit. Contacts protein L32.

In Actinobacillus succinogenes (strain ATCC 55618 / DSM 22257 / CCUG 43843 / 130Z), this protein is Large ribosomal subunit protein bL17.